We begin with the raw amino-acid sequence, 486 residues long: ATP synthase subunit beta (486 aa).

164–171 (GGAGVGKT) lines the ATP pocket.

The protein belongs to the ATPase alpha/beta chains family. As to quaternary structure, F-type ATPases have 2 components, CF(1) - the catalytic core - and CF(0) - the membrane proton channel. CF(1) has five subunits: alpha(3), beta(3), gamma(1), delta(1), epsilon(1). CF(0) has four main subunits: a(1), b(1), b'(1) and c(9-12).

Its subcellular location is the cellular thylakoid membrane. It catalyses the reaction ATP + H2O + 4 H(+)(in) = ADP + phosphate + 5 H(+)(out). Produces ATP from ADP in the presence of a proton gradient across the membrane. The catalytic sites are hosted primarily by the beta subunits. This is ATP synthase subunit beta from Prochlorococcus marinus (strain MIT 9312).